Here is a 1236-residue protein sequence, read N- to C-terminus: ATP-dependent helicase/nuclease subunit A (1236 aa).

A UvrD-like helicase ATP-binding domain is found at 2-457 (AHWTIEQEEA…VDLNKNFRSH (456 aa)). An ATP-binding site is contributed by 23–30 (AAAGSGKT). Positions 515–816 (NTAKRVEICI…RIMSIHKSKG (302 aa)) constitute a UvrD-like helicase C-terminal domain.

Belongs to the helicase family. AddA subfamily. In terms of assembly, heterodimer of AddA and AddB/RexB. The cofactor is Mg(2+).

The catalysed reaction is Couples ATP hydrolysis with the unwinding of duplex DNA by translocating in the 3'-5' direction.. The enzyme catalyses ATP + H2O = ADP + phosphate + H(+). Functionally, the heterodimer acts as both an ATP-dependent DNA helicase and an ATP-dependent, dual-direction single-stranded exonuclease. Recognizes the chi site generating a DNA molecule suitable for the initiation of homologous recombination. The AddA nuclease domain is required for chi fragment generation; this subunit has the helicase and 3' -&gt; 5' nuclease activities. This is ATP-dependent helicase/nuclease subunit A from Syntrophomonas wolfei subsp. wolfei (strain DSM 2245B / Goettingen).